A 428-amino-acid polypeptide reads, in one-letter code: MPGIVLIGAQWGDEGKGKATDLIGTKVDYVARFNGGNNAGHSVVVGDESYALHLLPSGIINPNLTPVIGNGVVVDPEVLFEEIDGLESRGIDCSHLKVSEAAHIIAPYHRTLDKVTERFLGKHKIGTTGRGIGPAYADKINRVGIRVHDLFNADHLHDKVEASLHQKNQMLVKLYNRRPIDVDQTTEELLKLGERLKPYVANTGLILNKALDEGKTVLFEGAQATMLDVDHGTYPFVTSSNPTAGGACTGTGVGPTRITRVVGVSKAYVTRVGEGPFPTELLDESGEWLRQQGHEFGVTTGRPRRCGWFDAVVNRYASQVNGLTDIVLTKLDVLAGLKEIPICVAYDVDGERHDDMPTDQAAFAAAKPIYETMPGWDEDISNCHSFDELPATCQAYVKRLEELSGCRISAIGTGPQRDHVIQINSLVD.

Residues 12–18 (GDEGKGK) and 40–42 (GHS) each bind GTP. Residue aspartate 13 is the Proton acceptor of the active site. Aspartate 13 and glycine 40 together coordinate Mg(2+). Residues 13–16 (DEGK), 38–41 (NAGH), threonine 128, arginine 142, glutamine 223, threonine 238, and arginine 302 each bind IMP. Histidine 41 (proton donor) is an active-site residue. Residue 298–304 (VTTGRPR) participates in substrate binding. GTP-binding positions include arginine 304, 330–332 (KLD), and 412–414 (GTG).

This sequence belongs to the adenylosuccinate synthetase family. As to quaternary structure, homodimer. Mg(2+) serves as cofactor.

The protein localises to the cytoplasm. It catalyses the reaction IMP + L-aspartate + GTP = N(6)-(1,2-dicarboxyethyl)-AMP + GDP + phosphate + 2 H(+). The protein operates within purine metabolism; AMP biosynthesis via de novo pathway; AMP from IMP: step 1/2. Its function is as follows. Plays an important role in the de novo pathway of purine nucleotide biosynthesis. Catalyzes the first committed step in the biosynthesis of AMP from IMP. This Bifidobacterium longum (strain NCC 2705) protein is Adenylosuccinate synthetase.